Reading from the N-terminus, the 443-residue chain is Thymidine phosphorylase (443 aa).

It belongs to the thymidine/pyrimidine-nucleoside phosphorylase family. As to quaternary structure, homodimer.

The enzyme catalyses thymidine + phosphate = 2-deoxy-alpha-D-ribose 1-phosphate + thymine. Its pathway is pyrimidine metabolism; dTMP biosynthesis via salvage pathway; dTMP from thymine: step 1/2. Its function is as follows. The enzymes which catalyze the reversible phosphorolysis of pyrimidine nucleosides are involved in the degradation of these compounds and in their utilization as carbon and energy sources, or in the rescue of pyrimidine bases for nucleotide synthesis. The protein is Thymidine phosphorylase of Shewanella putrefaciens (strain CN-32 / ATCC BAA-453).